Consider the following 288-residue polypeptide: THO complex subunit 4D (288 aa).

Residues 1–55 (MSGALNMTLDEIVKRGKTARSGGRGISRGRGRGRGGGGRGAGPARRGPLAVNARP) form a disordered region. Ser-2 carries the N-acetylserine modification. The region spanning 93 to 170 (TRLHVTNLDQ…RPMRLEILGG (78 aa)) is the RRM domain. The disordered stretch occupies residues 201-288 (QGGGGRGRVR…SYHADAMNTS (88 aa)). The segment covering 232 to 260 (QGGGMRGGRGGFRARGRGNGGRGRGGGRG) has biased composition (gly residues). Basic and acidic residues predominate over residues 264–281 (KPVEKSAADLDKDLESYH).

This sequence belongs to the ALYREF family. In terms of assembly, interacts with PARP1. Interacts with EIF4A3.

It localises to the nucleus. Its subcellular location is the nucleoplasm. It is found in the nucleolus. In terms of biological role, export adapter involved in nuclear export of spliced and unspliced mRNA. Plays a role in disease resistance. Mediates multiple defense responses triggered by NEP1, including stomatal closure, hypersensitive cell death (HCD) and defense-related gene expression. The sequence is that of THO complex subunit 4D from Arabidopsis thaliana (Mouse-ear cress).